Consider the following 219-residue polypeptide: Claudin-3 (219 aa).

Topologically, residues 1–8 are cytoplasmic; the sequence is MSMGLEIT. The helical transmembrane segment at 9–29 threads the bilayer; the sequence is GTSLAVLGWLCTIVCCALPMW. Over 30–80 the chain is Extracellular; that stretch reads RVSAFIGSSIITAQITWEGLWMNCVVQSTGQMQCKMYDSLLALPQDLQAAR. The helical transmembrane segment at 81–101 threads the bilayer; sequence ALIVVSILLAAFGLLVALVGA. Residues 102–115 are Cytoplasmic-facing; sequence QCTNCVQDETAKAK. Residues 116–136 traverse the membrane as a helical segment; the sequence is ITIVAGVLFLLAALLTLVPVS. Over 137–159 the chain is Extracellular; the sequence is WSANTIIRDFYNPLVPEAQKREM. The chain crosses the membrane as a helical span at residues 160 to 180; that stretch reads GAGLYVGWAAAALQLLGGALL. Residues 181 to 219 lie on the Cytoplasmic side of the membrane; that stretch reads CCSCPPRDKYAPTKILYSAPRSTGPGTGTGTAYDRKDYV. A Phosphotyrosine modification is found at Tyr-197. Ser-198 is subject to Phosphoserine. The tract at residues 218 to 219 is interactions with TJP1, TJP2 and TJP3; sequence YV.

It belongs to the claudin family. In terms of assembly, can form homo- and heteropolymers with other CLDN. Homopolymers interact with CLDN1 and CLDN2 homopolymers. Interacts in cis (within the same plasma membrane) with CLDN19. Directly interacts with TJP1/ZO-1, TJP2/ZO-2 and TJP3/ZO-3. (Microbial infection) Interacts with Clostridium perfringens enterotoxin CPE; the interaction may disrupt claudin assembly in tight junctions. Expressed in the lung. Expressed at high levels in the liver and at lower levels, in kidney and testis.

It localises to the cell junction. It is found in the tight junction. Its subcellular location is the cell membrane. Functionally, plays a major role in tight junction-specific obliteration of the intercellular space, through calcium-independent cell-adhesion activity. This Mus musculus (Mouse) protein is Claudin-3 (Cldn3).